The primary structure comprises 493 residues: Glutamyl-tRNA(Gln) amidotransferase subunit A (493 aa).

Catalysis depends on charge relay system residues lysine 81 and serine 156. Serine 180 functions as the Acyl-ester intermediate in the catalytic mechanism.

This sequence belongs to the amidase family. GatA subfamily. As to quaternary structure, heterotrimer of A, B and C subunits.

It catalyses the reaction L-glutamyl-tRNA(Gln) + L-glutamine + ATP + H2O = L-glutaminyl-tRNA(Gln) + L-glutamate + ADP + phosphate + H(+). Its function is as follows. Allows the formation of correctly charged Gln-tRNA(Gln) through the transamidation of misacylated Glu-tRNA(Gln) in organisms which lack glutaminyl-tRNA synthetase. The reaction takes place in the presence of glutamine and ATP through an activated gamma-phospho-Glu-tRNA(Gln). In Mycobacterium avium (strain 104), this protein is Glutamyl-tRNA(Gln) amidotransferase subunit A.